A 257-amino-acid chain; its full sequence is Type 2 phosphatidylinositol 4,5-bisphosphate 4-phosphatase (257 aa).

The span at 1–10 shows a compositional bias: basic and acidic residues; it reads MAADGVDERS. Residues 1–34 form a disordered region; it reads MAADGVDERSPLLSASHSGSVTPTAPPYLQDSSP. Residues 13–23 show a composition bias toward polar residues; sequence LSASHSGSVTP. Position 22 is a phosphothreonine (T22). A Phosphoserine modification is found at S33. C107 is a catalytic residue. The short motif at 107-113 is the CX5R motif element; it reads CKDTSRR. Helical transmembrane passes span 192 to 212 and 227 to 247; these read CCAYITIGMMCIFIGIGLTVG and WAIAYLLGLVCLIRACYWGAI.

The protein localises to the late endosome membrane. Its subcellular location is the lysosome membrane. It is found in the cytoplasmic vesicle. The protein resides in the phagosome membrane. It localises to the cell membrane. It carries out the reaction a 1,2-diacyl-sn-glycero-3-phospho-(1D-myo-inositol-4,5-bisphosphate) + H2O = a 1,2-diacyl-sn-glycero-3-phospho-(1D-myo-inositol-5-phosphate) + phosphate. Functionally, catalyzes the hydrolysis of phosphatidylinositol-4,5-bisphosphate (PtdIns-4,5-P2) to phosphatidylinositol-4-phosphate (PtdIns-4-P). Does not hydrolyze phosphatidylinositol 3,4,5-trisphosphate, phosphatidylinositol 3,4-bisphosphate, inositol 3,5-bisphosphate, inositol 3,4-bisphosphate, phosphatidylinositol 5-monophosphate, phosphatidylinositol 4-monophosphate and phosphatidylinositol 3-monophosphate. Negatively regulates the phagocytosis of large particles by reducing phagosomal phosphatidylinositol 4,5-bisphosphate accumulation during cup formation. This is Type 2 phosphatidylinositol 4,5-bisphosphate 4-phosphatase from Bos taurus (Bovine).